The sequence spans 193 residues: Ion-translocating oxidoreductase complex subunit A (193 aa).

6 helical membrane-spanning segments follow: residues 5–25 (LLLL…FLGL), 39–59 (IGMG…AYLV), 67–87 (LGIE…VVQF), 102–122 (LLGI…VALL), 134–154 (IIYG…FASM), and 171–191 (SIAM…TGLV).

Belongs to the NqrDE/RnfAE family. In terms of assembly, the complex is composed of six subunits: RnfA, RnfB, RnfC, RnfD, RnfE and RnfG.

The protein resides in the cell inner membrane. Part of a membrane-bound complex that couples electron transfer with translocation of ions across the membrane. The chain is Ion-translocating oxidoreductase complex subunit A from Vibrio cholerae serotype O1 (strain ATCC 39315 / El Tor Inaba N16961).